Reading from the N-terminus, the 202-residue chain is Urease accessory protein UreF (202 aa).

It belongs to the UreF family. As to quaternary structure, ureD, UreF and UreG form a complex that acts as a GTP-hydrolysis-dependent molecular chaperone, activating the urease apoprotein by helping to assemble the nickel containing metallocenter of UreC. The UreE protein probably delivers the nickel.

The protein resides in the cytoplasm. Required for maturation of urease via the functional incorporation of the urease nickel metallocenter. The sequence is that of Urease accessory protein UreF from Sporosarcina pasteurii (Bacillus pasteurii).